The following is a 347-amino-acid chain: Fused nickel transport protein NikMN (347 aa).

9 helical membrane passes run 6-26 (GYLS…FWYV), 40-60 (LPLV…NLPI), 73-93 (IAAV…ALLI), 96-116 (IFFG…MAVV), 140-160 (VIMA…LAAV), 185-205 (VAVP…EFIV), 236-256 (LWAG…AAGT), 273-293 (AAMA…GGFA), and 319-339 (VLSA…SAGL).

It belongs to the CbiM family. NikM subfamily. As to quaternary structure, forms an energy-coupling factor (ECF) transporter complex composed of an ATP-binding protein (A component, NikO), a transmembrane protein (T component, NikQ) and a fused possible substrate-capture protein (S component, NikMN) of unknown stoichimetry.

It is found in the cell inner membrane. Its function is as follows. Part of the energy-coupling factor (ECF) transporter complex NikMNQO involved in nickel import. The complex confers nickel uptake upon expression in E.coli; can also transport cobalt with a very low affinity. This is Fused nickel transport protein NikMN (nikMN) from Rhodobacter capsulatus (strain ATCC BAA-309 / NBRC 16581 / SB1003).